Consider the following 306-residue polypeptide: Ornithine carbamoyltransferase (306 aa).

Carbamoyl phosphate contacts are provided by residues 53–56 (STRT), Gln-80, Arg-104, and 131–134 (HPCQ). L-ornithine contacts are provided by residues Asn-162, Asp-220, and 224-225 (SM). Residues 260–261 (CL) and Arg-288 contribute to the carbamoyl phosphate site.

It belongs to the aspartate/ornithine carbamoyltransferase superfamily. OTCase family.

The protein resides in the cytoplasm. It carries out the reaction carbamoyl phosphate + L-ornithine = L-citrulline + phosphate + H(+). Its pathway is amino-acid biosynthesis; L-arginine biosynthesis; L-arginine from L-ornithine and carbamoyl phosphate: step 1/3. Reversibly catalyzes the transfer of the carbamoyl group from carbamoyl phosphate (CP) to the N(epsilon) atom of ornithine (ORN) to produce L-citrulline. The polypeptide is Ornithine carbamoyltransferase (Dechloromonas aromatica (strain RCB)).